A 304-amino-acid polypeptide reads, in one-letter code: uncharacterized protein (304 aa).

It belongs to the histone deacetylase family.

Putative deacetylase. This is an uncharacterized protein from Synechocystis sp. (strain ATCC 27184 / PCC 6803 / Kazusa).